Here is a 611-residue protein sequence, read N- to C-terminus: Pyrichalasin H cluster regulator pyiR (611 aa).

Positions 11 to 47 (CDRCRGHKLRCIRLDPGPNDTGALLPCKRCVKAGAEC) form a DNA-binding region, zn(2)-C6 fungal-type. 6 disordered regions span residues 53 to 128 (LSVK…LPPW), 169 to 192 (ALAA…DGTT), 265 to 291 (GGAG…GRSS), 401 to 427 (AHEG…AAPQ), 521 to 550 (RGGL…SDER), and 564 to 593 (SWFT…RTVE). The segment covering 59 to 69 (GDGHHSAHRAT) has biased composition (basic and acidic residues). The segment covering 98-109 (PTQPAPQRQTQR) has biased composition (low complexity). Residues 265–279 (GGAGSQSLRDQQMQQ) show a composition bias toward polar residues. Positions 572 to 587 (GGSGGSGPGEGTGDSN) are enriched in gly residues.

Its subcellular location is the nucleus. Transcription factor that specifically regulates the expression of the gene cluster that mediates the biosynthesis of the mycotoxin pyrichalasin H, a tyrosine-derived cytochalasan that inhibits the growth of rice seedlings, but also inhibits lymphocyte capping and actin polymerization and alters cell morphology. Pyrichalasin H is indicated as the responsible agent for the genus-specific pathogenicity of M.grisea toward crabgrass. The chain is Pyrichalasin H cluster regulator pyiR from Pyricularia grisea (Crabgrass-specific blast fungus).